Here is a 191-residue protein sequence, read N- to C-terminus: UPF0312 protein PSPA7_0523 (191 aa).

The N-terminal stretch at 1 to 23 (MLKKTLAALALGSALFTAGQAMA) is a signal peptide.

It belongs to the UPF0312 family. Type 1 subfamily.

The protein resides in the periplasm. The polypeptide is UPF0312 protein PSPA7_0523 (Pseudomonas paraeruginosa (strain DSM 24068 / PA7) (Pseudomonas aeruginosa (strain PA7))).